Consider the following 428-residue polypeptide: Sialidase-3 (428 aa).

Positions 24 to 27 match the FRIP motif motif; the sequence is YRIP. Residues arginine 25 and arginine 45 each contribute to the substrate site. The active-site Proton acceptor is the aspartate 50. The BNR 1 repeat unit spans residues 129 to 140; it reads ICSQDAGYSWSD. 2 residues coordinate substrate: tyrosine 179 and tyrosine 181. Residues 203 to 214 form a BNR 2 repeat; it reads IYSDDLGATWHH. Substrate is bound by residues glutamate 225 and arginine 245. A BNR 3 repeat occupies 254–265; it reads ALSIDHGECFQK. Phosphoserine is present on serine 314. Position 341 (arginine 341) interacts with substrate. Tyrosine 371 serves as the catalytic Nucleophile. Glutamate 388 is a catalytic residue.

It belongs to the glycosyl hydrolase 33 family. As to quaternary structure, interacts with CAV1; this interaction enhances NEU3 sialidase activity within caveola. Interacts with EGFR; this interaction mediates desialylation of EGFR and enhances downstream signaling. Palmitoylated; may regulate intracellular trafficking and anchorage to plasma membrane and endomembranes. As to expression, expressed in brain.

It is found in the cell membrane. It localises to the membrane. The protein localises to the caveola. The protein resides in the early endosome membrane. Its subcellular location is the recycling endosome membrane. It is found in the lysosome membrane. It carries out the reaction Hydrolysis of alpha-(2-&gt;3)-, alpha-(2-&gt;6)-, alpha-(2-&gt;8)- glycosidic linkages of terminal sialic acid residues in oligosaccharides, glycoproteins, glycolipids, colominic acid and synthetic substrates.. It catalyses the reaction a ganglioside GD1a + H2O = a ganglioside GM1 + N-acetylneuraminate. The catalysed reaction is a ganglioside GD1a (d18:1(4E)) + H2O = a ganglioside GM1 (d18:1(4E)) + N-acetylneuraminate. The enzyme catalyses a ganglioside GD1b + H2O = a ganglioside GM1 + N-acetylneuraminate. It carries out the reaction a ganglioside GD1b (d18:1(4E)) + H2O = a ganglioside GM1 (d18:1(4E)) + N-acetylneuraminate. It catalyses the reaction a ganglioside GD3 + H2O = a ganglioside GM3 + N-acetylneuraminate. The catalysed reaction is a ganglioside GD3 (d18:1(4E)) + H2O = a ganglioside GM3 (d18:1(4E)) + N-acetylneuraminate. The enzyme catalyses a ganglioside GM3 + H2O = a beta-D-galactosyl-(1-&gt;4)-beta-D-glucosyl-(1&lt;-&gt;1)-ceramide + N-acetylneuraminate. It carries out the reaction a ganglioside GM1 + H2O = a ganglioside GA1 + N-acetylneuraminate. It catalyses the reaction a ganglioside GM1 (d18:1(4E)) + H2O = a ganglioside GA1 (d18:1(4E)) + N-acetylneuraminate. The catalysed reaction is a ganglioside GM2 (d18:1(4E)) + H2O = a ganglioside GA2 (d18:1(4E)) + N-acetylneuraminate. The enzyme catalyses a ganglioside GM3 (d18:1(4E)) + H2O = a beta-D-Gal-(1-&gt;4)-beta-D-Glc-(1&lt;-&gt;1)-Cer(d18:1(4E)) + N-acetylneuraminate. It carries out the reaction a ganglioside GT1b + H2O = a ganglioside GD1b + N-acetylneuraminate. Functionally, exo-alpha-sialidase that catalyzes the hydrolytic cleavage of the terminal sialic acid (N-acetylneuraminic acid, Neu5Ac) of a glycan moiety in the catabolism of glycolipids, glycoproteins and oligosacharides. Displays high catalytic efficiency for gangliosides including alpha-(2-&gt;3)-sialylated GD1a and GM3 and alpha-(2-&gt;8)-sialylated GD3. Plays a role in the regulation of transmembrane signaling through the modulation of ganglioside content of the lipid bilayer and by direct interaction with signaling receptors, such as EGFR. Desialylates EGFR and activates downstream signaling in proliferating cells. Contributes to clathrin-mediated endocytosis by regulating sorting of endocytosed receptors to early and recycling endosomes. The sequence is that of Sialidase-3 (NEU3) from Bos taurus (Bovine).